A 207-amino-acid chain; its full sequence is Large ribosomal subunit protein uL4 (207 aa).

A disordered region spans residues 52–76 (KNTSLVSGGGKKPWKQKGTGRARQG).

The protein belongs to the universal ribosomal protein uL4 family. Part of the 50S ribosomal subunit.

One of the primary rRNA binding proteins, this protein initially binds near the 5'-end of the 23S rRNA. It is important during the early stages of 50S assembly. It makes multiple contacts with different domains of the 23S rRNA in the assembled 50S subunit and ribosome. Its function is as follows. Forms part of the polypeptide exit tunnel. This is Large ribosomal subunit protein uL4 from Myxococcus xanthus (strain DK1622).